The sequence spans 675 residues: Probable potassium transport system protein Kup (675 aa).

Over residues 1 to 12 the composition is skewed to basic and acidic residues; the sequence is MEPAMPEHDGDH. The segment at 1 to 25 is disordered; sequence MEPAMPEHDGDHASNPPHGVGIPND. 12 consecutive transmembrane segments (helical) span residues 62–82, 104–124, 153–173, 195–215, 222–242, 255–275, 300–320, 332–352, 390–410, 419–439, 450–470, and 472–492; these read ALLAVLGVVYGDIGTSPLYAL, LASLTFWALMLIVTIKYVILI, WLFGLVGIAGTCLFFGDSIIT, IIIPLAMVVLVALFSVQVLGT, FGPIMVCWFSVLAILGIKGIF, FALEFIVLHGYLSFIALGSVV, WLFFVLPSLTLNYFGQAALLI, LLVPHWAQIPMLVLATFATVI, IYLPSLNWILAFGALVLVLAF, AYGIAVTGTFLCTCVLAMVVF, VAIVFGFFFIVDSIFFSANVL, and IPDGGWVPLAIGIISTIIMTT.

Belongs to the HAK/KUP transporter (TC 2.A.72) family.

It localises to the cell inner membrane. The enzyme catalyses K(+)(in) + H(+)(in) = K(+)(out) + H(+)(out). Functionally, transport of potassium into the cell. Likely operates as a K(+):H(+) symporter. In Gluconobacter oxydans (strain 621H) (Gluconobacter suboxydans), this protein is Probable potassium transport system protein Kup.